A 292-amino-acid polypeptide reads, in one-letter code: Transcription antiterminator LacT (292 aa).

PRD domains lie at 66–170 (NIPI…DDGE) and 172–284 (VFGK…APAQ).

It belongs to the transcriptional antiterminator BglG family.

In terms of biological role, mediates positive regulation of the lac operon by functioning as an antiterminator factor of transcription. In Lacticaseibacillus casei (Lactobacillus casei), this protein is Transcription antiterminator LacT (lacT).